We begin with the raw amino-acid sequence, 434 residues long: Adenylosuccinate synthetase (434 aa).

Residues 13-19 (GDEGKGK) and 41-43 (GHT) each bind GTP. The active-site Proton acceptor is Asp14. Asp14 and Gly41 together coordinate Mg(2+). IMP-binding positions include 14-17 (DEGK), 39-42 (NAGH), Thr133, Arg147, Gln228, Thr243, and Arg307. The Proton donor role is filled by His42. 303–309 (STTGRKR) lines the substrate pocket. GTP contacts are provided by residues Arg309, 335–337 (KID), and 417–419 (STG).

The protein belongs to the adenylosuccinate synthetase family. In terms of assembly, homodimer. Requires Mg(2+) as cofactor.

Its subcellular location is the cytoplasm. It carries out the reaction IMP + L-aspartate + GTP = N(6)-(1,2-dicarboxyethyl)-AMP + GDP + phosphate + 2 H(+). It participates in purine metabolism; AMP biosynthesis via de novo pathway; AMP from IMP: step 1/2. Plays an important role in the de novo pathway of purine nucleotide biosynthesis. Catalyzes the first committed step in the biosynthesis of AMP from IMP. This is Adenylosuccinate synthetase from Wigglesworthia glossinidia brevipalpis.